Here is a 701-residue protein sequence, read N- to C-terminus: UvrABC system protein B (701 aa).

In terms of domain architecture, Helicase ATP-binding spans 35–422; that stretch reads RRIQGGAADT…GGDVVEQVIR (388 aa). 48–55 provides a ligand contact to ATP; it reads GATGTGKT. Residues 101–124 carry the Beta-hairpin motif; it reads YYDYYQPEAYVPQTDTYIEKDSSI. The 167-residue stretch at 439 to 605 folds into the Helicase C-terminal domain; it reads QIDDLVHEIR…PLRKKIADIL (167 aa). Positions 620–648 are disordered; that stretch reads ARSRGEKRGTPTPRSGALSGPDRVAEQAK. Residues 656–691 enclose the UVR domain; it reads AALVEQLTEQMHQAAADLQFELAARLRDEIKELKRE.

It belongs to the UvrB family. Forms a heterotetramer with UvrA during the search for lesions. Interacts with UvrC in an incision complex.

The protein localises to the cytoplasm. Functionally, the UvrABC repair system catalyzes the recognition and processing of DNA lesions. A damage recognition complex composed of 2 UvrA and 2 UvrB subunits scans DNA for abnormalities. Upon binding of the UvrA(2)B(2) complex to a putative damaged site, the DNA wraps around one UvrB monomer. DNA wrap is dependent on ATP binding by UvrB and probably causes local melting of the DNA helix, facilitating insertion of UvrB beta-hairpin between the DNA strands. Then UvrB probes one DNA strand for the presence of a lesion. If a lesion is found the UvrA subunits dissociate and the UvrB-DNA preincision complex is formed. This complex is subsequently bound by UvrC and the second UvrB is released. If no lesion is found, the DNA wraps around the other UvrB subunit that will check the other stand for damage. This is UvrABC system protein B from Thermobifida fusca (strain YX).